We begin with the raw amino-acid sequence, 454 residues long: uncharacterized protein (454 aa).

The 42-residue stretch at 364–405 (CSRPGCDAPAYHSEVHHVTPWTTTHRTDINDLTLACGPDNRL) folds into the HNH domain. The interval 415–434 (NAKGDTEWLPPAHLDHGQPR) is disordered.

The protein belongs to the Rv1128c/1148c/1588c/1702c/1945/3466 family.

This is an uncharacterized protein from Mycobacterium tuberculosis (strain CDC 1551 / Oshkosh).